Reading from the N-terminus, the 358-residue chain is DNA replication and repair protein RecF (358 aa).

30-37 lines the ATP pocket; that stretch reads GNNGSGKT.

This sequence belongs to the RecF family.

It is found in the cytoplasm. Its function is as follows. The RecF protein is involved in DNA metabolism; it is required for DNA replication and normal SOS inducibility. RecF binds preferentially to single-stranded, linear DNA. It also seems to bind ATP. The polypeptide is DNA replication and repair protein RecF (Histophilus somni (strain 2336) (Haemophilus somnus)).